The following is a 99-amino-acid chain: Putative pterin-4-alpha-carbinolamine dehydratase (99 aa).

The protein belongs to the pterin-4-alpha-carbinolamine dehydratase family.

The catalysed reaction is (4aS,6R)-4a-hydroxy-L-erythro-5,6,7,8-tetrahydrobiopterin = (6R)-L-erythro-6,7-dihydrobiopterin + H2O. This is Putative pterin-4-alpha-carbinolamine dehydratase from Saccharolobus islandicus (strain M.16.27) (Sulfolobus islandicus).